The following is a 129-amino-acid chain: Vacuolar transporter chaperone complex subunit 1 (129 aa).

Position 2 is an N-acetylserine (serine 2). The Cytoplasmic segment spans residues 2–32 (SSAPLLQRTPGKKIALPTRVEPKVFFANERT). Residues 33-53 (FLSWLNFTVMLGGLGVGLLNF) traverse the membrane as a helical segment. The Vacuolar segment spans residues 54–59 (GDKIGR). A helical transmembrane segment spans residues 60–80 (VSAGLFTFVAMGTMIYALVTY). The Cytoplasmic portion of the chain corresponds to 81–98 (HWRAAAIRRRGSGPYDDR). The helical transmembrane segment at 99–119 (LGPTLLCFFLLVAVIINFILR) threads the bilayer. Residues 120–129 (LKYNDANTKL) are Vacuolar-facing.

The protein belongs to the VTC1 family. The VTC core complex is an integral membrane heterooligomer composed of the catalytic subunit VTC4 and the accessory subunits VTC1, VTC2 and VTC3. The complex exists in 2 different sub-complexes: VTC1-VTC2-VCT4 and VCT1-VTC3-VTC4. The VCT1-VTC3-VTC4 subcomplex is mostly found on the vacuolar membrane. The VTC1-VTC2-VCT4 subcomplex is observed in the cell periphery, probably ER and nuclear envelope, but localizes to the vacuole under phosphate starvation. Each subunit contains 3 transmembrane helices. VTC1 is a small membrane protein without hydrophilic domain. VTC2, VTC3 and VTC4 are related and have 2 hydrophilic domains that face the cytosol, an N-terminal SPX domain and the central core domain. The central core in VTC4 is the catalytic domain, with the essential catalytic lysine replaced by isoleucine and leucine in VTC2 and VTC3, respectively. The core complex associates with the accessory subunit VTC5. The complex interacts with the v-SNARE NYV1 and with the V(0) subunit of V-ATPase VPH1.

It is found in the vacuole membrane. Its subcellular location is the cytoplasm. The protein resides in the cell cortex. It localises to the endoplasmic reticulum membrane. The protein localises to the cytoplasmic vesicle. It is found in the autophagosome membrane. Functionally, accessory subunit of the vacuolar transporter chaperone (VTC) complex. The VTC complex acts as a vacuolar polyphosphate polymerase that catalyzes the synthesis of inorganic polyphosphate (polyP) via transfer of phosphate from ATP to a growing polyP chain, releasing ADP. VTC exposes its catalytic domain VTC4 to the cytosol, where the growing polyP chain winds through a tunnel-shaped pocket, integrating cytoplasmic polymer synthesis with polyP membrane translocation. The VTC complex carries 9 vacuolar transmembrane domains, which are likely to constitute the translocation channel into the organelle lumen. PolyP synthesis is tightly coupled to its transport into the vacuole lumen, in order to avoid otherwise toxic intermediates in the cytosol, and it depends on the proton gradient across the membrane, formed by V-ATPase. VTC1 contributes only 3 transmembrane domains to the complex. The VTC complex also plays a role in vacuolar membrane fusion. Required for SEC18/NSF activity in SNARE priming, membrane binding of LMA1 and V(0) trans-complex formation. The sequence is that of Vacuolar transporter chaperone complex subunit 1 from Saccharomyces cerevisiae (strain ATCC 204508 / S288c) (Baker's yeast).